Consider the following 494-residue polypeptide: Beta-glucosidase 29 (494 aa).

Residues 1-28 (MAWLGIGMGRQIVPVLVFVAVLCSGVDA) form the signal peptide. Gln49 serves as a coordination point for a beta-D-glucoside. The N-linked (GlcNAc...) asparagine glycan is linked to Asn103. A beta-D-glucoside-binding positions include His138 and 183 to 184 (NE). The active-site Proton donor is Glu184. Cysteines 203 and 211 form a disulfide. A glycan (N-linked (GlcNAc...) asparagine) is linked at Asn263. Tyr327 is a binding site for a beta-D-glucoside. An N-linked (GlcNAc...) asparagine glycan is attached at Asn352. Glu398 serves as a coordination point for a beta-D-glucoside. Glu398 acts as the Nucleophile in catalysis. An N-linked (GlcNAc...) asparagine glycan is attached at Asn406. A beta-D-glucoside-binding positions include Trp447, 454 to 455 (EW), and Phe463.

This sequence belongs to the glycosyl hydrolase 1 family.

It catalyses the reaction Hydrolysis of terminal, non-reducing beta-D-glucosyl residues with release of beta-D-glucose.. This chain is Beta-glucosidase 29 (BGLU29), found in Oryza sativa subsp. japonica (Rice).